The following is a 254-amino-acid chain: CDP-diacylglycerol pyrophosphatase (254 aa).

A helical membrane pass occupies residues 6–26; that stretch reads YFLLALLVAILAALAGGYYWL.

It belongs to the Cdh family.

Its subcellular location is the cell inner membrane. It catalyses the reaction a CDP-1,2-diacyl-sn-glycerol + H2O = a 1,2-diacyl-sn-glycero-3-phosphate + CMP + 2 H(+). It participates in phospholipid metabolism; CDP-diacylglycerol degradation; phosphatidate from CDP-diacylglycerol: step 1/1. The sequence is that of CDP-diacylglycerol pyrophosphatase from Klebsiella pneumoniae (strain 342).